The sequence spans 454 residues: Membrane-bound lytic murein transglycosylase F (454 aa).

An N-terminal signal peptide occupies residues 1–24; it reads MRRPLRRVTVVLLWVALAIGVAWF. The segment at 25-265 is non-LT domain; the sequence is YDYRRSMQSL…IYNRYYTAVD (241 aa). Residues 266 to 454 form an LT domain region; that stretch reads TFDYVDVKKF…YDILKQKKAV (189 aa). Glu-311 is a catalytic residue.

This sequence in the N-terminal section; belongs to the bacterial solute-binding protein 3 family. It in the C-terminal section; belongs to the transglycosylase Slt family.

Its subcellular location is the cell outer membrane. The enzyme catalyses Exolytic cleavage of the (1-&gt;4)-beta-glycosidic linkage between N-acetylmuramic acid (MurNAc) and N-acetylglucosamine (GlcNAc) residues in peptidoglycan, from either the reducing or the non-reducing ends of the peptidoglycan chains, with concomitant formation of a 1,6-anhydrobond in the MurNAc residue.. Its function is as follows. Murein-degrading enzyme that degrades murein glycan strands and insoluble, high-molecular weight murein sacculi, with the concomitant formation of a 1,6-anhydromuramoyl product. Lytic transglycosylases (LTs) play an integral role in the metabolism of the peptidoglycan (PG) sacculus. Their lytic action creates space within the PG sacculus to allow for its expansion as well as for the insertion of various structures such as secretion systems and flagella. In Desulfosudis oleivorans (strain DSM 6200 / JCM 39069 / Hxd3) (Desulfococcus oleovorans), this protein is Membrane-bound lytic murein transglycosylase F.